The sequence spans 788 residues: Integrin beta-6 (788 aa).

The first 21 residues, 1-21 (MGIELLCLFFLCLGRNDHVQG), serve as a signal peptide directing secretion. A PSI domain is found at 22 to 71 (GCAVGGAETCEDCLLIGPQCAWCSQENFTHLSGVGERCDTPANLLAKGCQ). At 22–709 (GCAVGGAETC…KDCPKPPNIP (688 aa)) the chain is on the extracellular side. Cystine bridges form between C23–C41, C31–C454, C34–C59, C44–C70, C197–C204, C252–C293, C394–C406, C426–C452, C456–C476, C467–C479, C481–C490, C492–C519, C502–C517, C511–C522, C524–C537, C539–C560, C544–C558, C552–C563, and C565–C574. N48 and N97 each carry an N-linked (GlcNAc...) asparagine glycan. Residues 131–371 (YPVDLYYLMD…QLIISAYEEL (241 aa)) form the VWFA domain. Positions 140, 142, and 144 each coordinate Mg(2+). Positions 144, 147, 148, and 179 each coordinate Ca(2+). 4 residues coordinate Ca(2+): N235, D237, P239, and E240. Residue E240 participates in Mg(2+) binding. N-linked (GlcNAc...) asparagine glycosylation is present at N260. Residues D271 and K355 each contribute to the Ca(2+) site. Residue N387 is glycosylated (N-linked (GlcNAc...) asparagine). N-linked (GlcNAc...) asparagine glycosylation is present at N418. 4 I-EGF domains span residues 456 to 491 (CQKE…HHCE), 492 to 538 (CGED…PYCQ), 539 to 575 (CDNF…EYCN), and 576 to 615 (CTTS…PTCE). N463 and N471 each carry an N-linked (GlcNAc...) asparagine glycan. A glycan (N-linked (GlcNAc...) asparagine) is linked at N541. N-linked (GlcNAc...) asparagine glycosylation is present at N575. Cystine bridges form between C576–C599, C583–C597, C591–C602, C604–C614, C617–C620, C624–C670, C630–C649, C633–C645, and C678–C702. A helical membrane pass occupies residues 710 to 730 (MIMLGVSLAILLIGVVLLCIW). The tract at residues 731-758 (KLLVSFHDRKEVAKFEAERSKAKWQTGT) is interaction with HAX1. The Cytoplasmic segment spans residues 731–788 (KLLVSFHDRKEVAKFEAERSKAKWQTGTNPLYRGSTSTFKNVTYKHKEKQKVDLSTDG).

It belongs to the integrin beta chain family. In terms of assembly, heterodimer of an alpha and a beta subunit. Interacts with FLNB. Interacts with HAX1. ITGAV:ITGB6 interacts with FBN1. ITGAV:ITGB6 interacts with TGFB1.

It is found in the cell membrane. The protein resides in the cell junction. Its subcellular location is the focal adhesion. In terms of biological role, integrin alpha-V:beta-6 (ITGAV:ITGB6) is a receptor for fibronectin and cytotactin. It recognizes the sequence R-G-D in its ligands. ITGAV:ITGB6 acts as a receptor for fibrillin-1 (FBN1) and mediates R-G-D-dependent cell adhesion to FBN1. Integrin alpha-V:beta-6 (ITGAV:ITGB6) mediates R-G-D-dependent release of transforming growth factor beta-1 (TGF-beta-1) from regulatory Latency-associated peptide (LAP), thereby playing a key role in TGF-beta-1 activation. This chain is Integrin beta-6 (ITGB6), found in Bos taurus (Bovine).